Here is a 138-residue protein sequence, read N- to C-terminus: ATP synthase epsilon chain (138 aa).

The protein belongs to the ATPase epsilon chain family. F-type ATPases have 2 components, CF(1) - the catalytic core - and CF(0) - the membrane proton channel. CF(1) has five subunits: alpha(3), beta(3), gamma(1), delta(1), epsilon(1). CF(0) has three main subunits: a, b and c.

The protein resides in the cell inner membrane. Its function is as follows. Produces ATP from ADP in the presence of a proton gradient across the membrane. This Geotalea daltonii (strain DSM 22248 / JCM 15807 / FRC-32) (Geobacter daltonii) protein is ATP synthase epsilon chain.